The chain runs to 365 residues: WAT1-related protein At4g01430 (365 aa).

Transmembrane regions (helical) follow at residues 7–27 (WAPV…NALV), 39–59 (IFGA…SYIW), 76–96 (FISG…GLSY), 100–120 (TVSM…ALIF), 132–152 (AGVL…LLTF), 183–203 (WLLG…WMLF), 216–236 (YSST…LSLY), 250–270 (FVIL…TVVT), 280–300 (VFVS…DFLI), and 305–325 (LYLG…VFLW). The EamA 1 domain maps to 20–151 (MGSVNALVKK…ICIMGAMLLT (132 aa)). The EamA 2 domain maps to 216–324 (YSSTCLMSVF…VTITGLYVFL (109 aa)). The disordered stretch occupies residues 339–365 (LNSSQFSQNKDNEDHTIANHKDTNLPV). The span at 348 to 365 (KDNEDHTIANHKDTNLPV) shows a compositional bias: basic and acidic residues.

Belongs to the drug/metabolite transporter (DMT) superfamily. Plant drug/metabolite exporter (P-DME) (TC 2.A.7.4) family.

It localises to the membrane. In Arabidopsis thaliana (Mouse-ear cress), this protein is WAT1-related protein At4g01430.